Consider the following 479-residue polypeptide: Ribosomal RNA small subunit methyltransferase F (479 aa).

Residues 125-131 (AAAPGSK), Glu-149, Asp-176, and Asp-194 each bind S-adenosyl-L-methionine. Residue Cys-247 is the Nucleophile of the active site.

Belongs to the class I-like SAM-binding methyltransferase superfamily. RsmB/NOP family.

The protein resides in the cytoplasm. The enzyme catalyses cytidine(1407) in 16S rRNA + S-adenosyl-L-methionine = 5-methylcytidine(1407) in 16S rRNA + S-adenosyl-L-homocysteine + H(+). Functionally, specifically methylates the cytosine at position 1407 (m5C1407) of 16S rRNA. This chain is Ribosomal RNA small subunit methyltransferase F, found in Escherichia coli (strain SMS-3-5 / SECEC).